The sequence spans 537 residues: Inositol phosphorylceramide glucuronosyltransferase 1 (537 aa).

A helical transmembrane segment spans residues 6 to 26 (TSLWVLLLALVSIQLNGSFGS). 2 residues coordinate Mn(2+): D124 and D126. Substrate-binding positions include 124–126 (DAD), 153–155 (NSG), 180–184 (TGGDQ), and 248–255 (HYTLGPLK). Residue H248 coordinates Mn(2+). The next 5 helical transmembrane spans lie at 293 to 313 (DELV…FCIY), 375 to 395 (VSVV…FAIV), 406 to 426 (VLVY…FLLF), 468 to 488 (MAFL…TALF), and 494 to 514 (MVGL…HLAV).

It belongs to the glycosyltransferase 8 family. Glycogenin subfamily. It depends on Mn(2+) as a cofactor. As to expression, expressed in seedlings, roots, leaves, stems and siliques.

The protein localises to the golgi apparatus membrane. The enzyme catalyses glucuronate acceptor + UDP-alpha-D-glucuronate = acceptor beta-D-glucuronoside + UDP + H(+). It catalyses the reaction a 1D-myo-inositol-1-phospho-N-[(R)-2-hydroxy-very-long-chain fatty acyl]-(R)-4-hydroxysphingoid base + UDP-alpha-D-glucuronate = an alpha-D-glucuronosyl-(1&lt;-&gt;6)-1D-myo-inositol-1-phospho-N-[(R)-2-hydroxy-very-long-chain fatty acyl]-(R)-4-hydroxysphingoid base + UDP + H(+). Its pathway is sphingolipid metabolism. Its function is as follows. Mediates the transfer of glucuronic acid (GlcA) from UDP-GlcA to glycosyl inositol phosphorylceramides (GIPCs). The formation of GIPCs sphingolipids is essential for pollen function, plant growth and defense. Required for global fitness. The polypeptide is Inositol phosphorylceramide glucuronosyltransferase 1 (Arabidopsis thaliana (Mouse-ear cress)).